The primary structure comprises 420 residues: D-tagatose-1,6-bisphosphate aldolase subunit GatZ (420 aa).

It belongs to the GatZ/KbaZ family. GatZ subfamily. Forms a complex with GatY.

Its pathway is carbohydrate metabolism; D-tagatose 6-phosphate degradation; D-glyceraldehyde 3-phosphate and glycerone phosphate from D-tagatose 6-phosphate: step 2/2. Component of the tagatose-1,6-bisphosphate aldolase GatYZ that is required for full activity and stability of the Y subunit. Could have a chaperone-like function for the proper and stable folding of GatY. When expressed alone, GatZ does not show any aldolase activity. Is involved in the catabolism of galactitol. The protein is D-tagatose-1,6-bisphosphate aldolase subunit GatZ of Escherichia coli O139:H28 (strain E24377A / ETEC).